The sequence spans 154 residues: MPKVAVGGTFQYLHDGHARLIEKAFEIAGSGKVYIGLTSDEMLQKNHSVESYKIRRSRLLEYIKKMGVPEEKYEVTRLNDPCGPTIEEDFDHIIVSPETYPVALKINTIREKKGKKPLEIVYVEYVMAEDGIPISSTRISKGEIDRHGRLKKEA.

Belongs to the eukaryotic CoaD family.

Its subcellular location is the cytoplasm. It catalyses the reaction (R)-4'-phosphopantetheine + ATP + H(+) = 3'-dephospho-CoA + diphosphate. It functions in the pathway cofactor biosynthesis; coenzyme A biosynthesis. Reversibly transfers an adenylyl group from ATP to 4'-phosphopantetheine, yielding dephospho-CoA (dPCoA) and pyrophosphate. In Methanosarcina mazei (strain ATCC BAA-159 / DSM 3647 / Goe1 / Go1 / JCM 11833 / OCM 88) (Methanosarcina frisia), this protein is Phosphopantetheine adenylyltransferase.